The chain runs to 111 residues: Probable 4-amino-4-deoxy-L-arabinose-phosphoundecaprenol flippase subunit ArnE (111 aa).

Residues 1–35 lie on the Cytoplasmic side of the membrane; it reads MIWLTLVFASLLSVAGQLCQKQATCFAAVNKRRKH. A helical membrane pass occupies residues 36–56; it reads IVLWLGLALACLGLAMVLWLL. The region spanning 40–109 is the EamA domain; it reads LGLALACLGL…IIGGIVILGS (70 aa). The Periplasmic segment spans residues 57–60; that stretch reads VLQN. The chain crosses the membrane as a helical span at residues 61–81; that stretch reads VPVGIAYPMLSLNFVWVTLAA. Over 82-87 the chain is Cytoplasmic; it reads VKLWHE. The helical transmembrane segment at 88–108 threads the bilayer; sequence PVSLRHWCGVAFIIGGIVILG. Over 109–111 the chain is Periplasmic; sequence STV.

The protein belongs to the ArnE family. As to quaternary structure, heterodimer of ArnE and ArnF.

The protein localises to the cell inner membrane. The protein operates within bacterial outer membrane biogenesis; lipopolysaccharide biosynthesis. Translocates 4-amino-4-deoxy-L-arabinose-phosphoundecaprenol (alpha-L-Ara4N-phosphoundecaprenol) from the cytoplasmic to the periplasmic side of the inner membrane. In Escherichia coli (strain UTI89 / UPEC), this protein is Probable 4-amino-4-deoxy-L-arabinose-phosphoundecaprenol flippase subunit ArnE.